We begin with the raw amino-acid sequence, 7756 residues long: MNSMGDLTDLYTLTPLQEGMLFHSLYSEGSAYMIQTTAILTGELDIVPFEKAWKKVIQRHSILRTGFIWEETEKPLQAVFESVPFSIRQKDWSSYGSDEQESMLAAFLQNEKAAGFDLSEAPLMRVTIIKLGEAVHRLIWSFHHLLLDGWSSPIVFQEVLDFYEAYRQGKDLRLPQARPFKDYVSWLRRQDKTASEQFWREFLGPMENPTPIPFETHAKRTAGHEGLEKQIGEATRALTGQVTKALAKLARTNKVTVNTIVQGAWAILLSRLSGEENVVYGVTGSGRPSDLPGVEQMVGMFINTLPMKAKIEPEQSLADWFKALQEQQSKVRQYEYTSLVDIQGWTDVPRGTPLFESIFVFENYPLGEEDEKEVGFTISAVQHFQEVDNPLTVVGIPGDPFSIKMMYATDRFEQAAIERTLDQLALILEAIVDNPERSLSALSLLRPEERQHLLVGLNDTATNYPSDKTVHQLFAETAARHPERIAAVAGDQQLTYAELEARANQLANYLQKQGVEAGTLVGLCVDRSLDMLIGLLAILKAGGAYVPIDPAYPEERLAFMLADAKISILLTQKHLGKQWKGRKRRTVYLDRDAKKWAEESPLAPDVDTTKDSLAYVIYTSGSTGTPKGVLAVHRGVVRLGQKTRTTSPISEADVFLQASTVSFDAATFEIWGALLNGAKLVLMPPDLPSLDELGEAIVQHKVTTLWLTAGLFSIMVDHNADYLRGVRQLLVGGDVVSVPHVRKVLALGGVTVINGYGPTENTTFTCCYPVTELSEDITSFPIGRPISNTTVYVLDKHKQPVPYGAAGELYIGGDGLALGYLNNAELTAERFVENPFDPQKGSRLYRTGDLVRYLPNGTIEFIGRIDNQVKIRGFRIELGEVEAALALHPEVSETVVMARENDRGEKHLTAYVTVAKDDAPEVADLQAWLKTKLPEYMVPSAYVFLDAMPLTANGKIDRRRLPEPEWGNRSETKAYTEPRNQAEELIASIWSQVLGVEKVGIHDNFFELGGHSLLATRVISRLREVFGVEQSVRSIFEHPTIDAWSEQTAALQLGGPGTDDSSTQIQPVPRDGALPLSFAQQRLWFFDQLMPDNPMYNIPFALRLQGELDVAAWEKSLQAIIARHESLRTTFTDIDGQAVQVIHPQLDWKLDTVDLRDRSSEEKQQASARLAADDAARPFDLRQGPLMRATMIRTEEQAHVFLINMHHIVSDGWSVGVFLRELFAHYEAYSKGEVPQLAPMPIQYADFAAWQREWLEGEVLEQQVAYWKEKLGGAEPLLALPTDRPRPALQSYEGATYTTSFSHDLLAKLKKLSKEAQHDLVHDIARRFPNVLYRYSGQEDIVVGSPVAGRNRQETEKLIGFFVNTLALRTSLSGDLPFTELLARVRETALAAYAHQDVPFEKLVDELQLERSLSYSQLFQVMFVLQNFPLEDVETAGLHVAPVDTESHLTTSKFDLTLTMREKEDTLVAAFEYSTDLFDRTTIERMAEHLQHLLASIVTQPEASLDQLALLGESEWNRLVVEQNETATDYPRDKTAHQLFAETAARYPERIAAVAGDQQLTYAELDTKANQLANYLQKQGVEAGTLVGLCVDRSLDMLVGLLAILKAGGAYVPLDPAYPEERLAFMLADANVSILLTQKHLGKQWKGRKRRTVYLDRDAKKWTAESPLAPAVDATKDSLAYVIYTSGSTGTPKGVLVAHRGIVRLVKNTNYVTITEEDVFLQASTVSFDAATFEIWGALLNGAKLVLMPPDLPSLDELGEAIVQHKVTTLWLTAGLFSIMVDHNADYLRGVRQLLVGGDVVSVPHVRKVLALDGVTVINGYGPTENTTFTCCYPVTELAEEITSFPIGRPISNTTVYVLDKNRQPVPLGVAGELYIGGDGLASGYLNNPELTAERFVDNPFDPQKASRLYRTGDLVRYLPDGAIEFIGRIDNQVKIRGFRIELGEIETALLRHPAVQEAFLMVREDAPGDKRLAAYLVFAGGQTVEPVEMRSYLKDKLPEYMIPSAFVQMDSFPLTPNGKVDRRALPTPEYARSEAASGYVAPATELEVKLADIWKTVLGVADVGIHDNFFELGGDSILSIQIVARANQLGIRLTPKQLFENQTIAELLRVVADSSQLPHTKWENEQGIVTGNVPLTPIQKWFFAADQPSLHHWNQSLLLTVQQPVDVSVLERAIASLLSHHDALRMSFSFVDGAWTQQMNGLGDHTPFRCVDLSDLSTQEQEQAARLEEIASEVQASLNIAEGNVVQAVYFNLGEQKAGRLLLVVHHLVVDGVSWRILLEDLQHAYEQLANHADVSFPAKTTSFKMWAEKLADYADSDALEQEKAYWLQQSSGGSPLPVDHPYEPNENTEAAAKQVTLSLRADETRALLHETLTAYRLQINDVLLAALAKAMQRWTGQKTLHVHLEGHGREEIIEGADLSRTVGWFTSMYPVQLDFDQSKPWGHVLKAVKEQLRHIPQKGIGYGILQYLSNDDEWKEQLQAYTKPEISFNYLGQFDQVVSAGAKFAMAEESRGANIAADAIRAHLIDVNSAISGEQLHITWMYNANIHNQETIEALARDYMESLREIMEHCRSEEAGGYTPSDFPLARLDQRAIDNYVGRDRSIENVYPLTPLQEGMLFHSLYEHAGGDYVVQFSMTMHHVEVDVFQQAWQKVVDRHSILRTSFIWDGVSTPHQIVRKHVQVVVDEQDWRHVPADQQKAEWDAFLEEDRKRSFAITEPPLMRWTLLRISDTAYRFIWSFHHVLLDGWSVPLVMKDWFAAYMALADGKDIQFGAVHPFSQYVAWIQRQDLQAAERFWRNHLKGIYAPTQVNFGQTVQPVGETKSYDERSIRFSAERTRELQAFARQHQVTLNTLVQSAWAMILGTYSKEADVVFGATGSGRPADLPGVENMVGLFINTLPIRVTLDPGKKVREWLRELQELQVELRQYEYTPLVDIHGWSEMARNAPLFESIFIFENYPIDESVKEVDHSFQIADVDSVEQTNYPLTVVCGPGAEFLVKIKFDQSRFDGGRIERVLEQMTLLLQSMTANPDQLLADVNMISQSEQKQVLIEWNETKVDYPTGLCVQQAFEQQVEKTPDAVALIYKDVELTYADLNQRANQLAHRLLAQEVKPDTLVGICVERSPEMIIGIFGVMKAGAAYVPIDPALPQERIAYMVEDSQASILLTQQSLAELLPKTQARVICLDGDSLANEPVANPASEVTEQNLAYVMYTSGSTGLPKGVMVEHHSVVNLAHALIEAFRIQPSSRVLQFTSFSFDVSVSEIVMALLAGAALVIEDREVLLPGPELISVLQQKRITTVSMVSSVLAALPAADLPDLQTLIVGGEAPSRELVARYADRRQFFNCYGPTEATVCSTMMLCNAGMKSAPIGRPLANATLYVLDANQKPVPVGVPGELYIGGKGLARGYWNRPELTAERFIAHPFGAKGERLYRTGDLVRYLPDGNLEFLGRIDTQVKIRGYRIELGEIESALSQHPAIQEAVVIAWEQRLAAYMVAAGEAQPAAEELARYLKETLPDYMIPAGFVFMDAIPLTVNGKVDRRALPAPDWGILATRQEYVAPRTPTEEMVANIWAQLLSVEKIGVHDDFFERGGHSLLATQAISRLRQAFGVELPLRMLFDHPTTAAISTQIASLLQGETALRSQPIVPVPRDQHVPLSFAQQRLWFLDRLIPNSFLYNIPSAARLHGELDVEAWERSLKLLIQRHESLRTTFSDRDGEAVQIIHPAIEWSLGRVDLREWAEAEREAKALQLAIEDAKRPFDLERGPLLRASLLVMAQQEYVFLLNLHHIVADGWSMNVFMEELVTIYEALSAGETPQLAELPLQYADYAAWQRDWLQGDVLEQQLAYWKAKVGGAEPLLALPTDRPRPAVQSHKGAMHTITLPAERLAALKTLSREEGSTLFMTLLAAFQTLLYRYSGQSDIVVGSPVAGRNRQETESLIGFFINTLAMRTDLSGEPTFRDLLGKVRETALEAYAHQDLPFEKLVDELELERSLSYSPLFQVMFVLQNIPMDAQALSHIRLEPFHIGQEGVSAKFDITLTTVELPAGLMATFEYNTDLFDPATIERMAGHYANLLAAVSVNPLQPITAIPLVSDQERKQVLFQWNDTSVPSERDTCVHEQVARIAQQLPNQLAVVSDEGQITYAELDAKANQVANYLHKQGIISETLVGVCLDRSIDMLVAQLGILKAGGAYVPMDPAYPQERLAFMMQDAEMPVVLTQEHLLAQLPEARATFLCLDRDWSLIAEESDVAPVIATNRDNLAYVIYTSGSTGTPKGVEIEHAALLNLVSWHQRAYEVGAEDRATQIAGTAFDASVWEIWPYLTKGATLYLPSEEIRLVPEQLRDWLVASGITISFLPTPLAERLLTLEWPSDAKLRYMLTGGDKLHDYPPATLPFVLANQYGPTENAVVATAGIVPAAAGQVSAPSIGRPIDNVQVYVLDEKLQPVPIGVAGELYIAGDSLARGYLHRPDLTRERFIANPYGQKAGARMYKTGDLVRYLPDGNIEFIGRADDQVSIRGFRVELGEIETALYSHPAVKETIVLVREDMPGMKRLVAYIVQREGQEGQAVQAGDFRSYLKELLPEYMVPAAFVFMADLPLTPNGKVDRRALPAPDLFNSEADGTYVAPATELEIKLAHIWKNVLGLADVGIHDNFFELGGDSILSIQIVSRANQAGIRLTPKQLLANQTIAELASVATVTDESEATKLPNEQGIVTGDVPLTPIQTWFFASEQPSVHHWNQSLLLTVQQPVDLAVLERTIECLLAHHDALRMRYSRTEQGWTQRIEGLPETIPFRSVDLSAFPTTAEQEMRLEEIASEVQASLDLTEGPVVQAVYFQLGAEQPGRLLIVAHHLVVDGVSWRILLEDLQTAYEQLAKGQAVQLAAKTTSFKTWAEQLRLYATSEALRQEKAFWLEQMDEVKPLPIDRIFEPSENTEATVKQVMLSLNAEETRALLQDTLSPYRLQINDVLLAALTKALHRWTGEQTVAIHLEGHGREELIEGADLSRTVGWFTSLYPVQLSVDPTKPWGDTLKAVKEQLRSIPNKGVGYGILRYLSEDAELQKRLAEKAQAEISFNYLGQFDQAVVPESKFGMAQEARGANVGQQAIRQHLLDVNSVIAGEQLHVTWMYSENIHEEATIQQLAHNYLEALREIIAHGQSEAAGGYTPSDFPLARMDQRALDKYLGQNRSIENVYPLSPLQGGMLFHSLYEQEGGDYVVQLAMTVEGLDVEAFEQAWQKVVDRHSILRTSFIWEGLTEPHQVVRKQVKACVEKIDLRHLTPDQQKAELSEYLAADRRRSFEIAVAPLMRWTLFRLSESAYRFTWSFHHVLLDGWSIPIVLKDWFSAYLSLAEGKEVAHSFVQPFAHYVEWVQRQDLQAAEQFWREQLAGFYEPTPLAMGNSTGGRADLPKGYEEQEIRLAKDATARLQAFVRTHQLTLNTLVQGAWALMLGRYGGTDDVVFGATGSGRPADLPGVESMVGLFINTLPIRVALDANQSVREWLRGMQEQQVELRQYEYTPLVDIQGWSEMTRNTALFESIFIFENYPIGESVKDEQHQLRLSDVETIEQTNYPLTVVCGPGEELIVKIKYEQNRFAPEQIERVLQQMSQLLQDMTAKPEQRLQDVSMISERERQQVLVDWNETSVAYPQQLCVHQAFEQQVEKTPDAVALVYKDVELTYAELNERANQLAHRLLAEGVKPDELVGICVERSPEMIVAFLGVMKAGAAYVPLDPAHPQERIAYMIEDSQASVLLTQASLTDRLPASSRQVICLDSDELANEPVTNAETSVGEHNLAYVIYTSGSTGLPKGVMIEHRSVINLAYDLIRHFQIDATSRVLQFISFSFDVSVSEIVMSLLAGATLVIEDRESLLPGPELIRVLQEQRITTFAMVSSVLAALPEADLPDLRTIIVGGEAPSRELVARYATGRQFINCYGPTETTVTATLKHCQDDGKNPPIGRPIANTTVYVLDAHLQPVPIGVPGELYIGGKGVARGYWNRPELTAERFIADPFGQADERLYRTGDLVRYLENGELEFLGRIDDQVKIRGYRIELGEIENALRQHPAVQNVVVIARQEGAGDKRLAAYLVAATGQQPDEAELVRYLKSTLPEYMVPAGYVWLEKIPLTVNGKVDRRALPAPDYGHAETGKAYVAPRKPIEEIVANIWAQVLSVERVGVYDDFFELGGHSLLATQAVSRLKEAFGVNVPLRTLFEHPDVAGMSEKLAGLLEEQSGVTSIPLVPVPRDKQLPLSFAQQRLWFLDRLMPDSALYNIPSAVRIQGQLNIRAWERSLQTIIERHESLRTTFTDIGGEAVQVIHEMMEWRLVEIDLRDLPDEEREAAVQRLEKAEASQPFNLRTGPLLRATLIQTGEEDFVFLLNMHHIVSDGWSMSIFMGELATIYEALSKGDTPQLAEMPLQYADFAAWQRDWLQGEVLEQQLAYWREKLGAAEPMLALPTDRPRPAVQTHHGALYTTAFPLALTEKLHALSRQEGATLFMTLLAAFQTLLYRYSGQDDIIVGSPVAGRNKQETESMIGFFINTLAMRTDMSGAPTFRELLARVRDTALEAYTHQDLPFEKLIDELELERSLSYSPLFQVMFALQNFQMLTREFEGIEIVPFESKNEAVMSKYDISLTMAETQNGLVATFDYNTDLFDHSTIVRMVNHFHQLLEGIVARPDSSIQALPLLATDEREQLVSAWNNTAAAYTYEQTVHELVAAMAEKMPEQLAVVSAEGSLTYAQLDAKANQLANYLQQQGITPETLVGICVERSSEMIVGQLGILKAGGAFVPMDPAYPQERLAFMMADTGMPFVLTQERLLETLPAGDAAFICLDADWEVIAEESTQAPELAVTTDQLAYVIYTSGSTGTPKGVEIEHRALLNLIYWHQHAYTITPDDRASQIAGTAFDAAVWEIWPYMTAGATLYLPQEEIRLIPEKLRDWLVAEGITISFLPTPLAESMLSVDWPSHAALRYVLTGGDKLHHYPAEHVPFTLVNQYGPTENAVVATAGIVAVQAGQVTPPSIGRPIDNVQVYILDEQRQPVPIGVTGELYIAGSSLARGYYKRPDLTQERFVDNPFTANRGAKMYRTGDLVRYLPDGQIEFIGRSDDQVSIRGFRVELGEIESVLYQHPAVKEAIVLAREDMPGVKRLAAYVVVAEDDAEQADDLRGYLKEKLPEYMVPAAFVTLKALPLTPNGKVDRRALPVPEYTAADGEYVAPETFVEKVLAQIWKEVLGVEEVGIHDNFFELGGDSILSIQIVARAGQSGIRLSPKLLFENQTIAELSHAVGDSVHICAEQGLVTGEVPLLPIQHWFFEQKLADRNHWNQSVLLTVQPIDPEILKQAFYHLLGHHDALRLRFYHQNGAWKQAGAEWTDIIPFYVVELGDLPANQQVEQIEKLSGEAQASLHLADGPLLRAVYFDMGAGQEGRLLIVIHHLAVDGVSWRIITEDLNKACNQLLQGKQVQLPPKTSSYKYWAEKLVEYAASDSLTEEADYWLSRLDTEVAALPKDYEHGQNRELAARTVSVALTQEETKVLLQELPAVYQTQINDVLLTALAEAVFVWTGNQTTLVHLEGHGREDIFDDVDLSRTVGWFTSMYTILLDTRGTSSLTEALQTTKEQLRSIPHKGIGYGILRYLNKETAEKFKSLPKAQISFNYLGQLDQAVRDTDSLFGFASEARGDNFNRNSDRQHLLDFGCSVVGGQLVVSVAFSKEIYRKETIEALADYYITALRQLLAHAKTDKAAAPAQSAASNLSEFGWDDEEIADLLDLIQDK.

Carrier domains lie at 977-1052, 2042-2116, 3557-3632, 4621-4695, 6141-6216, and 7200-7274; these read EPRN…AALQ, APAT…ADSS, APRT…ASLL, APAT…TVTD, APRK…AGLL, and APET…GDSV. 6 positions are modified to O-(pantetheine 4'-phosphoryl)serine: S1012, S2077, S3592, S4656, S6176, and S7235.

It belongs to the ATP-dependent AMP-binding enzyme family. In terms of assembly, large multienzyme complex composed of 4 subunits; LgrA, LgrB, LgrC and LgrD. Requires pantetheine 4'-phosphate as cofactor.

Functionally, activates the 7th to 12th amino acids (Val, D-Val, Trp, D-Leu, Xaa and D-Leu) in linear gramicidin and catalyzes the formation of the peptide bond between them. This enzyme is also responsible for the epimerization of the 8th (D-Val), the 10th (D-Leu) and 12th (D-Leu) amino acids. The 11th (Xaa) amino acid is Trp in linear gramicidin A; Phe in linear gramicidin B and Tyr in linear gramicidin C. This Brevibacillus parabrevis protein is Linear gramicidin synthase subunit C (lgrC).